A 205-amino-acid polypeptide reads, in one-letter code: MMRTLITTHPLPLLLLPQQLLQPVQFQEVDTDFDFPEEDKKEDFEEYLEQFFSTGPTRPPTKEKVKRRVLIESGMPLNHIEYCTHEIMGKNVYYKHRCVAERYFLLMQYDELQKICYNRFVPCKNGIRKCNRSKGLVEGVYCNLTEAFEIPACKYESLYRKGYVLITCSWQNEMQKRIPHTINDLVEPPEHRSFLSEDGVFVIPP.

A signal peptide spans 1–26; the sequence is MMRTLITTHPLPLLLLPQQLLQPVQF. Disulfide bonds link cysteine 98–cysteine 153, cysteine 116–cysteine 168, and cysteine 123–cysteine 130. N-linked (GlcNAc...) asparagine glycans are attached at residues asparagine 131 and asparagine 143.

It belongs to the pancreatic ribonuclease family.

The protein resides in the secreted. Does not exhibit any ribonuclease activity. The chain is Inactive ribonuclease-like protein 9 (RNASE9) from Pan troglodytes (Chimpanzee).